Reading from the N-terminus, the 407-residue chain is MILTQLPAEFQAAKPIIETIEAAGYEAYFVGGCVRDTILGKPLHDVDIATSAFPAEVKQLFKRTVDTGIEHGTVMILDHGNGYETTTFRTESGYQDFRRPDQVTFVRSLKEDLKRRDFTINALAMTANGEVIDLFDGLADMEQGILRAVGVAEERFHEDALRMMRAVRFASQLGFTIESQTEQAIADNAALLAKIAVERTRVEWEKLLMGQHPVAGLTGLLTTDLYRYMPAMADQEAMLRQLMALPAWHLPSIESTWTLLSWTMQRTDEAAVRQLLKTWKTSNELINHVTAAIKALMALKHNGQLTAQENFYTGLEALKTANQVATILGFGQDQAQLVQSYASLPIHDKHELAINGGDLLKAKLVTPGPMMGQILAACLQAVVMKQVPNQQDALLDFARMVADSKNH.

Positions 32 and 35 each coordinate ATP. CTP-binding residues include G32 and R35. Mg(2+)-binding residues include D45 and D47. 5 residues coordinate ATP: R116, D159, R162, R165, and R168. 5 residues coordinate CTP: R116, D159, R162, R165, and R168.

Belongs to the tRNA nucleotidyltransferase/poly(A) polymerase family. Bacterial CCA-adding enzyme type 3 subfamily. As to quaternary structure, homodimer. Requires Mg(2+) as cofactor.

It carries out the reaction a tRNA precursor + 2 CTP + ATP = a tRNA with a 3' CCA end + 3 diphosphate. The catalysed reaction is a tRNA with a 3' CCA end + 2 CTP + ATP = a tRNA with a 3' CCACCA end + 3 diphosphate. Catalyzes the addition and repair of the essential 3'-terminal CCA sequence in tRNAs without using a nucleic acid template. Adds these three nucleotides in the order of C, C, and A to the tRNA nucleotide-73, using CTP and ATP as substrates and producing inorganic pyrophosphate. tRNA 3'-terminal CCA addition is required both for tRNA processing and repair. Also involved in tRNA surveillance by mediating tandem CCA addition to generate a CCACCA at the 3' terminus of unstable tRNAs. While stable tRNAs receive only 3'-terminal CCA, unstable tRNAs are marked with CCACCA and rapidly degraded. This Lactiplantibacillus plantarum (strain ATCC BAA-793 / NCIMB 8826 / WCFS1) (Lactobacillus plantarum) protein is CCA-adding enzyme.